We begin with the raw amino-acid sequence, 401 residues long: Ribosomal protein uS12 methylthiotransferase RimO (401 aa).

An MTTase N-terminal domain is found at 1-108 (MKINFINLGC…GIELLQTPKR (108 aa)). [4Fe-4S] cluster-binding residues include Cys-10, Cys-43, Cys-72, Cys-124, Cys-128, and Cys-131. In terms of domain architecture, Radical SAM core spans 110-339 (LTTKHYAYLK…FNLSQEILEE (230 aa)).

It belongs to the methylthiotransferase family. RimO subfamily. Requires [4Fe-4S] cluster as cofactor.

The protein resides in the cytoplasm. The enzyme catalyses L-aspartate(89)-[ribosomal protein uS12]-hydrogen + (sulfur carrier)-SH + AH2 + 2 S-adenosyl-L-methionine = 3-methylsulfanyl-L-aspartate(89)-[ribosomal protein uS12]-hydrogen + (sulfur carrier)-H + 5'-deoxyadenosine + L-methionine + A + S-adenosyl-L-homocysteine + 2 H(+). In terms of biological role, catalyzes the methylthiolation of an aspartic acid residue of ribosomal protein uS12. The protein is Ribosomal protein uS12 methylthiotransferase RimO of Hydrogenobaculum sp. (strain Y04AAS1).